We begin with the raw amino-acid sequence, 296 residues long: Nitrogenase iron protein 2 (296 aa).

Position 11-18 (glycine 11–serine 18) interacts with ATP. [4Fe-4S] cluster is bound at residue cysteine 99. Arginine 102 is modified (ADP-ribosylarginine; by dinitrogenase reductase ADP-ribosyltransferase). [4Fe-4S] cluster is bound at residue cysteine 133.

Belongs to the NifH/BchL/ChlL family. Homodimer. The cofactor is [4Fe-4S] cluster. The reversible ADP-ribosylation of Arg-102 inactivates the nitrogenase reductase and regulates nitrogenase activity.

The enzyme catalyses N2 + 8 reduced [2Fe-2S]-[ferredoxin] + 16 ATP + 16 H2O = H2 + 8 oxidized [2Fe-2S]-[ferredoxin] + 2 NH4(+) + 16 ADP + 16 phosphate + 6 H(+). Its function is as follows. The key enzymatic reactions in nitrogen fixation are catalyzed by the nitrogenase complex, which has 2 components: the iron protein and the molybdenum-iron protein. In Azorhizobium caulinodans (strain ATCC 43989 / DSM 5975 / JCM 20966 / LMG 6465 / NBRC 14845 / NCIMB 13405 / ORS 571), this protein is Nitrogenase iron protein 2 (nifH2).